The sequence spans 131 residues: Holo-[acyl-carrier-protein] synthase (131 aa).

Mg(2+) contacts are provided by Asp8 and Glu57.

Belongs to the P-Pant transferase superfamily. AcpS family. It depends on Mg(2+) as a cofactor.

It is found in the cytoplasm. The enzyme catalyses apo-[ACP] + CoA = holo-[ACP] + adenosine 3',5'-bisphosphate + H(+). Functionally, transfers the 4'-phosphopantetheine moiety from coenzyme A to a Ser of acyl-carrier-protein. In Desulforudis audaxviator (strain MP104C), this protein is Holo-[acyl-carrier-protein] synthase.